The chain runs to 238 residues: Synapse differentiation-inducing gene protein 1-like (238 aa).

Disordered regions lie at residues 1-24 (MESLSELQNPLLPRSPTHLHGPYP), 78-111 (KVKEPRPGSCETSFTEGREPPAGPTERSTEPGQA), and 126-155 (EEFQGQEGDPEEEESDATSTESESEDNFLT). Over 1-162 (MESLSELQNP…FLTLPPRDHL (162 aa)) the chain is Extracellular. Over residues 133 to 151 (GDPEEEESDATSTESESED) the composition is skewed to acidic residues. Residues 163 to 183 (GLTIFSMLCCFWPLGIAAFYF) traverse the membrane as a helical segment. The Cytoplasmic segment spans residues 184–205 (SQGTSKAISKGDFRLANTTSRR). The chain crosses the membrane as a helical span at residues 206 to 226 (ALFLATLSIAVGAGLYVAVVV). Residues 227–238 (ALAAYMSQNGHS) are Extracellular-facing.

The protein belongs to the CD225/Dispanin family.

It is found in the membrane. It localises to the golgi apparatus. The protein localises to the cis-Golgi network. The protein is Synapse differentiation-inducing gene protein 1-like (SYNDIG1L) of Bos taurus (Bovine).